A 590-amino-acid polypeptide reads, in one-letter code: Protein NRT1/ PTR FAMILY 6.3 (590 aa).

2 helical membrane passes run 46-66 (LTTLGIGVNLVTYLTGTMHLG) and 77-97 (FLGTSFMLCLLGGFIADTFLG). Phosphothreonine; by CIPK23 is present on Thr101. 10 helical membrane passes run 102-122 (IAIFAAIQATGVSILTLSTII), 143-163 (GIQLTVLYLALYLTALGTGGV), 193-213 (FFFCINVGSLLAVTVLVYVQD), 219-239 (WGYGICAFAIVLALSVFLAGT), 342-362 (MLPIWATCILFWTVHAQLTTL), 374-394 (IGSFEIPPASMAVFYVGGLLL), 423-443 (IGLGLFFGSMAMAVAALVELK), 460-480 (LGFYLLIPQYLIVGIGEALIY), 501-521 (GLLLSTLALGFFFSSVLVTIV), and 542-562 (YNFYWLVAVLVALNFLIFLVF). The substrate site is built by His356 and Thr360.

It belongs to the major facilitator superfamily. Proton-dependent oligopeptide transporter (POT/PTR) (TC 2.A.17) family. In terms of assembly, monomer and homodimer. The dimer has the 2 monomers in the same orientation. Interacts with CIPK23. Post-translationally, acts as a high-affinity nitrate transporter when phosphorylated and as a low-affinity transporter when dephosphorylated. Forms homodimer when unphosphorylated and monomer when phosphorylated. Low nitrogen concentration in the medium stimulates phosphorylation. Phosphorylation also regulates the nitrate signaling. Expressed in the stele in lateral root primordia before emergence and in the tip of primary and emerged lateral roots. Detected in emerging and immature leaves, guard cells, flower buds, style, stigma, anthers and pollen grains. Not detected in the shoot apical meristem.

Its subcellular location is the membrane. Dual affinity nitrate transporter. Involved in proton-dependent nitrate uptake and in the regulation of the nitrate transporter NRT2.1. Also acts as a nitrate sensor that trigger a specific signaling pathway stimulating lateral root growth and seed germination. The uptake activity is not required for sensor function. Displays an auxin transport facilitation inhibited by high nitrate concentration. Required to prevent auxin accumulation in preemerged lateral root primordia and young lateral roots when external nitrate concentration is low or null. May be involved in the basipetal transport of auxin out of the lateral root tips. Acts as a bidirectional transporter involved in root-to-shoot nitrate translocation. Recognizes specifically nitrate and chlorate, but not nitrite, alanine, sulfate, phosphate or the di-peptide Ala-Ala. This is Protein NRT1/ PTR FAMILY 6.3 (NPF6.3) from Arabidopsis thaliana (Mouse-ear cress).